The sequence spans 37 residues: Ferredoxin--NADP reductase, chloroplastic (37 aa).

Residues S3 and 24–25 contribute to the NADP(+) site; that span reads SR.

The protein belongs to the ferredoxin--NADP reductase type 1 family. FAD serves as cofactor.

It localises to the plastid. Its subcellular location is the chloroplast stroma. It is found in the chloroplast thylakoid membrane. It carries out the reaction 2 reduced [2Fe-2S]-[ferredoxin] + NADP(+) + H(+) = 2 oxidized [2Fe-2S]-[ferredoxin] + NADPH. The protein operates within energy metabolism; photosynthesis. Its function is as follows. May play a key role in regulating the relative amounts of cyclic and non-cyclic electron flow to meet the demands of the plant for ATP and reducing power. In Imperata cylindrica (Cogon grass), this protein is Ferredoxin--NADP reductase, chloroplastic.